Consider the following 82-residue polypeptide: Small ribosomal subunit protein bS16 (82 aa).

This sequence belongs to the bacterial ribosomal protein bS16 family.

This Microcystis aeruginosa (strain NIES-843 / IAM M-2473) protein is Small ribosomal subunit protein bS16.